A 61-amino-acid chain; its full sequence is uncharacterized protein (61 aa).

Residues 23 to 61 (VPTKWQDYKKPGPNQKYTSDGKKRRRIRRSQKSILGVRS) are disordered. Residues 44 to 53 (KKRRRIRRSQ) are compositionally biased toward basic residues.

This is an uncharacterized protein from Archaeoglobus fulgidus (strain ATCC 49558 / DSM 4304 / JCM 9628 / NBRC 100126 / VC-16).